A 422-amino-acid chain; its full sequence is Tyrosine--tRNA ligase (422 aa).

Tyr-35 provides a ligand contact to L-tyrosine. Residues 40-49 (PTAASLHVGH) carry the 'HIGH' region motif. 2 residues coordinate L-tyrosine: Tyr-169 and Gln-173. The short motif at 229–233 (KFGKT) is the 'KMSKS' region element. Position 232 (Lys-232) interacts with ATP. In terms of domain architecture, S4 RNA-binding spans 352-418 (VRLAQLFADT…GKKSLASVAV (67 aa)).

This sequence belongs to the class-I aminoacyl-tRNA synthetase family. TyrS type 1 subfamily. Homodimer.

The protein localises to the cytoplasm. It catalyses the reaction tRNA(Tyr) + L-tyrosine + ATP = L-tyrosyl-tRNA(Tyr) + AMP + diphosphate + H(+). Catalyzes the attachment of tyrosine to tRNA(Tyr) in a two-step reaction: tyrosine is first activated by ATP to form Tyr-AMP and then transferred to the acceptor end of tRNA(Tyr). In Kineococcus radiotolerans (strain ATCC BAA-149 / DSM 14245 / SRS30216), this protein is Tyrosine--tRNA ligase.